Here is a 93-residue protein sequence, read N- to C-terminus: Small integral membrane protein 41 (93 aa).

The chain crosses the membrane as a helical span at residues 38-58 (VVLGVLSLLVLCGVLFLGGGL). The segment covering 71–80 (REQRASREPE) has biased composition (basic and acidic residues). The disordered stretch occupies residues 71-93 (REQRASREPEPGSASGEDGDDDS).

The protein resides in the membrane. This chain is Small integral membrane protein 41, found in Homo sapiens (Human).